Reading from the N-terminus, the 459-residue chain is Probable rhamnogalacturonase C (459 aa).

A signal peptide spans 1–18 (MRASILPLTLFLATLAGA). N-linked (GlcNAc...) asparagine glycosylation is found at Asn-36, Asn-64, Asn-77, Asn-140, and Asn-155. A disulfide bond links Cys-39 and Cys-65. Residue Asp-216 is the Proton donor of the active site. Residues Cys-218 and Cys-235 are joined by a disulfide bond. Asn-236 and Asn-251 each carry an N-linked (GlcNAc...) asparagine glycan. His-290 is a catalytic residue. A glycan (N-linked (GlcNAc...) asparagine) is linked at Asn-315. Cys-337 and Cys-343 are oxidised to a cystine. Asn-356 carries an N-linked (GlcNAc...) asparagine glycan. Cysteines 365 and 374 form a disulfide.

Belongs to the glycosyl hydrolase 28 family.

The protein resides in the secreted. Its function is as follows. Pectinolytic enzymes consist of four classes of enzymes: pectine lyase, polygalacturonase, pectin methylesterase and rhamnogalacturonase. Hydrolyzes alpha-D-galacturonopyranosyl-(1,2)-alpha-L-rhamnopyranosyl linkages in the backbone of the hairy regions of pectins. This chain is Probable rhamnogalacturonase C (rhgC), found in Aspergillus niger (strain ATCC MYA-4892 / CBS 513.88 / FGSC A1513).